Reading from the N-terminus, the 354-residue chain is Isocitrate dehydrogenase [NAD] regulatory subunit A, mitochondrial (354 aa).

Residues Ser-95, Asn-97, Arg-101, Arg-111, and Arg-132 each contribute to the substrate site. Mg(2+) contacts are provided by Asp-219, Asp-243, and Asp-247. NADP(+)-binding positions include 276-282 and Asn-289; that span reads HGTAPDI.

This sequence belongs to the isocitrate and isopropylmalate dehydrogenases family. Heterooligomer of catalytic and regulatory subunits. Requires Mg(2+) as cofactor. The cofactor is Mn(2+).

It localises to the mitochondrion. It catalyses the reaction D-threo-isocitrate + NAD(+) = 2-oxoglutarate + CO2 + NADH. In terms of biological role, performs an essential role in the oxidative function of the citric acid cycle. This chain is Isocitrate dehydrogenase [NAD] regulatory subunit A, mitochondrial (idhA), found in Dictyostelium discoideum (Social amoeba).